The chain runs to 391 residues: Tyrosinase-like protein phomQ2 (391 aa).

The interval 1–21 (MDNVGCEASSSRDPKGKKAVG) is disordered. The helical transmembrane segment at 61–81 (IRGFICATIIFVVCLGALSYI) threads the bilayer. 2 N-linked (GlcNAc...) asparagine glycosylation sites follow: Asn97 and Asn141. Residues His160 and His169 each contribute to the Cu cation site. Asn204, Asn246, and Asn261 each carry an N-linked (GlcNAc...) asparagine glycan. Cu cation contacts are provided by His298 and His324. The N-linked (GlcNAc...) asparagine glycan is linked to Asn353.

This sequence belongs to the tyrosinase family. It depends on Cu(2+) as a cofactor.

Its subcellular location is the membrane. Its pathway is mycotoxin biosynthesis. Functionally, tyrosinase-like protein; part of the gene cluster that mediates the biosynthesis of the phomopsins, a group of hexapeptide mycotoxins which infects lupins and causes lupinosis disease in livestock. Within the pathway, phomQ2 is involved in the generation of the common 13-membered macrocycle, possibly by catalyzing the hydroxylation of Tyr. The pathway starts with the processing of the precursor phomA by several endopeptidases including kexin proteases as well as the cluster-specific S41 family peptidase phomP1 and the oligopeptidase phomG to produce 10 identical copies of the hexapeptide Tyr-Val-Ile-Pro-Ile-Asp. After being excised from the precursor peptide, the core peptides are cyclized and modified post-translationally by enzymes encoded within the gene cluster. The timing and order of proteolysis of the phomA precursor and PTMs are still unknown. Two tyrosinase-like enzymes, phomQ1 and phomQ2, catalyze the chlorination and hydroxylation of Tyr, respectively. PhomYb, is proposed to be involved in the construction of the macrocyclic structure. The other 4 ustYa family proteins may be involved in PTMs that generate the unique structure of phomopsin A. PhomYa is required for the hydroxylation of C-beta of Tyr. PhomYc, phomYd, and phomYe are responsible for the biosynthesis of 2,3-dehydroisoleucine (dIle), 2,3-dehydroaspartic acid (dAsp), and 3,4-dehydroproline (dPro), respectively. While dIle formation by phomYc is indispensable for the installation of dAsp by phomYd, the order of the other PTMs have not been elucidated yet. Most of the biosynthetic enzymes likely have broad substrate specificity, and thus, there might be a metabolic grid from a precursor to phomopsin A. The enzyme(s) responsible for the biosynthesis of 3,4-dehydrovaline (dVal) have also not been identified yet. Finally, phomM acts as an S-adenosylmethionine-dependent alpha-N-methyltransferase that catalyzes two successive N-methylation reactions, converting N-desmethyl-phomopsin A to phomopsin A and phomopsin A further to an N,N-dimethylated congener called phomopsin E. The sequence is that of Tyrosinase-like protein phomQ2 from Diaporthe leptostromiformis (Lupinosis disease fungus).